Consider the following 1331-residue polypeptide: Lysine-specific demethylase 3A-A (1331 aa).

3 disordered regions span residues 243 to 280 (LNDK…PSKD), 358 to 381 (TPPQ…TQNL), and 497 to 532 (KVVK…VTYP). A compositionally biased stretch (basic and acidic residues) spans 266–280 (TELKQTRNEEVPSKD). Residues 683–708 (CDACDTTIFNLHWVCPKCGFGVCVDC) form a C6-type zinc finger. An LXXLL motif motif is present at residues 894-898 (LRNLL). The region spanning 1086–1291 (RREGKLNLAA…HCFWLTQEFR (206 aa)) is the JmjC domain. Residues His1130, Asp1132, and His1259 each contribute to the Fe cation site.

This sequence belongs to the JHDM2 histone demethylase family. Fe(2+) serves as cofactor.

Its subcellular location is the cytoplasm. It is found in the nucleus. The enzyme catalyses N(6),N(6)-dimethyl-L-lysyl(9)-[histone H3] + 2 2-oxoglutarate + 2 O2 = L-lysyl(9)-[histone H3] + 2 formaldehyde + 2 succinate + 2 CO2. Its function is as follows. Histone demethylase that specifically demethylates 'Lys-9' of histone H3, thereby playing a central role in histone code. Preferentially demethylates mono- and dimethylated H3 'Lys-9' residue, with a preference for dimethylated residue, while it has weak or no activity on trimethylated H3 'Lys-9'. Demethylation of Lys residue generates formaldehyde and succinate. This Xenopus laevis (African clawed frog) protein is Lysine-specific demethylase 3A-A (kdm3a-a).